A 1295-amino-acid polypeptide reads, in one-letter code: Phosphoribosylformylglycinamidine synthase (1295 aa).

Positions 305–327 are disordered; the sequence is WPGAATGSGGEIRDEGATGRGAK. ATP contacts are provided by residues 307–318 and alanine 678; that span reads GAATGSGGEIRD. Mg(2+) contacts are provided by glutamate 718, asparagine 722, and aspartate 884. An ATP-binding site is contributed by serine 886. The Glutamine amidotransferase type-1 domain occupies 1042–1295; that stretch reads VAVLREQGVN…IFRNARKQLG (254 aa). Cysteine 1135 acts as the Nucleophile in catalysis. Active-site residues include histidine 1260 and glutamate 1262.

It in the N-terminal section; belongs to the FGAMS family. As to quaternary structure, monomer.

Its subcellular location is the cytoplasm. The enzyme catalyses N(2)-formyl-N(1)-(5-phospho-beta-D-ribosyl)glycinamide + L-glutamine + ATP + H2O = 2-formamido-N(1)-(5-O-phospho-beta-D-ribosyl)acetamidine + L-glutamate + ADP + phosphate + H(+). It participates in purine metabolism; IMP biosynthesis via de novo pathway; 5-amino-1-(5-phospho-D-ribosyl)imidazole from N(2)-formyl-N(1)-(5-phospho-D-ribosyl)glycinamide: step 1/2. Phosphoribosylformylglycinamidine synthase involved in the purines biosynthetic pathway. Catalyzes the ATP-dependent conversion of formylglycinamide ribonucleotide (FGAR) and glutamine to yield formylglycinamidine ribonucleotide (FGAM) and glutamate. The protein is Phosphoribosylformylglycinamidine synthase of Shigella boydii serotype 4 (strain Sb227).